We begin with the raw amino-acid sequence, 254 residues long: Probable phosphomannomutase (254 aa).

Residue aspartate 14 is the Nucleophile of the active site. Aspartate 14 and aspartate 16 together coordinate Mg(2+). Aspartate 16 serves as the catalytic Proton donor/acceptor. Positions 23, 129, 140, 147, 185, and 187 each coordinate alpha-D-mannose 1-phosphate. Residues aspartate 214, phenylalanine 226, aspartate 228, and threonine 231 each coordinate Mg(2+).

Belongs to the eukaryotic PMM family. In terms of assembly, homodimer.

Its subcellular location is the cytoplasm. It carries out the reaction alpha-D-mannose 1-phosphate = D-mannose 6-phosphate. It functions in the pathway nucleotide-sugar biosynthesis; GDP-alpha-D-mannose biosynthesis; alpha-D-mannose 1-phosphate from D-fructose 6-phosphate: step 2/2. Involved in the synthesis of the GDP-mannose and dolichol-phosphate-mannose required for a number of critical mannosyl transfer reactions. The polypeptide is Probable phosphomannomutase (Caenorhabditis elegans).